Here is a 130-residue protein sequence, read N- to C-terminus: MAIVGVGIDLVSIPDFAEQVDRPGTVFAETFTPGERRDAADKSSSAARHLAARWAAKEAVIKAWSSSRFSKRPALPEGIHRDIEVVTDMWGRPKVRLSGEIAKHLEDVTIHVSLTHEDQTAAAVAIIEEP.

The Mg(2+) site is built by D9 and E58.

It belongs to the P-Pant transferase superfamily. AcpS family. The cofactor is Mg(2+).

Its subcellular location is the cytoplasm. It carries out the reaction apo-[ACP] + CoA = holo-[ACP] + adenosine 3',5'-bisphosphate + H(+). In terms of biological role, transfers the 4'-phosphopantetheine moiety from coenzyme A to a Ser of acyl-carrier-protein. This Mycolicibacterium smegmatis (strain ATCC 700084 / mc(2)155) (Mycobacterium smegmatis) protein is Holo-[acyl-carrier-protein] synthase.